The primary structure comprises 427 residues: Stabilizer of axonemal microtubules 4 (427 aa).

Disordered regions lie at residues 82–105 (TSKS…PLPW), 273–298 (RTLN…QPPQ), and 314–335 (GNKE…SYEQ). Polar residues-rich tracts occupy residues 287–298 (ASMSHRSYQPPQ) and 321–332 (FTLNNPSYVRSS).

Microtubule inner protein component of sperm flagellar doublet microtubules. Interacts with PPP1CA.

The protein resides in the cell projection. It is found in the cilium. The protein localises to the cytoplasm. Its subcellular location is the cytoskeleton. It localises to the flagellum axoneme. This Mus musculus (Mouse) protein is Stabilizer of axonemal microtubules 4.